The primary structure comprises 367 residues: Cis-3-hydroxy-L-proline dehydratase (367 aa).

The Proton donor/acceptor role is filled by Lys-165. Positions 193, 218, and 241 each coordinate Mg(2+). Lys-265 acts as the Proton donor/acceptor in catalysis.

The protein belongs to the mandelate racemase/muconate lactonizing enzyme family. Requires Mg(2+) as cofactor.

It carries out the reaction cis-3-hydroxy-L-proline = 1-pyrroline-2-carboxylate + H2O. Catalyzes the dehydration of cis-3-hydroxy-L-proline (c3LHyp) to Delta(1)-pyrroline-2-carboxylate (Pyr2C). Is likely involved in a degradation pathway that converts c3LHyp to L-proline, which allows L.aggregata to grow on c3LHyp as a sole carbon source. Also catalyzes the epimerization of c3LHyp to trans-3-hydroxy-D-proline (t3DHyp), a competing reaction occurring from the same enolate anion intermediate. L-proline, t3LHyp, t4LHyp, c4DHyp and their methylated derivatives are not substrates. This is Cis-3-hydroxy-L-proline dehydratase from Roseibium aggregatum (strain ATCC 25650 / DSM 13394 / JCM 20685 / NBRC 16684 / NCIMB 2208 / IAM 12614 / B1) (Stappia aggregata).